Reading from the N-terminus, the 98-residue chain is Acylphosphatase (98 aa).

An Acylphosphatase-like domain is found at 12–98; it reads TYYVRVRGVV…ERRFERFQQQ (87 aa). Active-site residues include Arg-27 and Asn-45.

It belongs to the acylphosphatase family.

The catalysed reaction is an acyl phosphate + H2O = a carboxylate + phosphate + H(+). The polypeptide is Acylphosphatase (acyP) (Burkholderia vietnamiensis (strain G4 / LMG 22486) (Burkholderia cepacia (strain R1808))).